Consider the following 934-residue polypeptide: Oxysterol-binding protein-related protein 6 (934 aa).

The disordered stretch occupies residues 1 to 62 (MSSDEKGISP…RQLLEPEPVP (62 aa)). Serine 2 is modified (N-acetylserine). Residues 14 to 29 (TSTPTHRSASSSTSSQ) show a composition bias toward low complexity. Over residues 30–40 (RDSRQSIHILE) the composition is skewed to basic and acidic residues. Serine 35 is subject to Phosphoserine. The span at 42–53 (TASSSTEPSVSR) shows a compositional bias: polar residues. The PH domain maps to 86-181 (PDKHEGFMLK…WVSKLRHHRL (96 aa)). Phosphoserine is present on residues serine 190 and serine 290.

This sequence belongs to the OSBP family. In terms of assembly, homodimer. Interacts with OSBPL3. As to expression, expressed in brain and striated muscle (at protein level). Widely expressed. Expressed in skeletal muscle.

The protein resides in the cytoplasm. It localises to the cytosol. The protein localises to the endoplasmic reticulum membrane. Its subcellular location is the nucleus envelope. It is found in the cell membrane. The protein resides in the endosome membrane. In terms of biological role, regulates cellular transport and efflux of cholesterol. Plays a role in phosphatidylinositol-4-phophate (PI4P) turnover at the neuronal membrane. Binds via its PH domain PI4P, phosphatidylinositol-4,5-diphosphate, phosphatidylinositol-3,4,5-triphosphate, and phosphatidic acid. Weakly binds 25-hydroxycholesterol. This chain is Oxysterol-binding protein-related protein 6 (OSBPL6), found in Homo sapiens (Human).